The chain runs to 561 residues: NAD(P)H-quinone oxidoreductase chain 4 2 (561 aa).

14 consecutive transmembrane segments (helical) span residues 6-26 (FPWL…IPFI), 36-56 (WYGL…FWKY), 87-107 (LSMP…FAAW), 115-135 (LFYF…VAQD), 136-156 (LMLL…LISI), 169-189 (FLLY…GMAL), 210-230 (AFEL…LAVF), 244-264 (SAPV…YGLI), 275-295 (HVYF…YGGL), 312-332 (VAHM…GISG), 333-353 (ALLQ…LAGV), 376-396 (IFAL…MSGF), 419-439 (VTVF…LSML), and 490-510 (VAIA…PKIA).

It belongs to the complex I subunit 4 family.

It is found in the cellular thylakoid membrane. It catalyses the reaction a plastoquinone + NADH + (n+1) H(+)(in) = a plastoquinol + NAD(+) + n H(+)(out). It carries out the reaction a plastoquinone + NADPH + (n+1) H(+)(in) = a plastoquinol + NADP(+) + n H(+)(out). NDH-1 shuttles electrons from NAD(P)H, via FMN and iron-sulfur (Fe-S) centers, to quinones in the respiratory chain. The immediate electron acceptor for the enzyme in this species is believed to be plastoquinone. Couples the redox reaction to proton translocation (for every two electrons transferred, four hydrogen ions are translocated across the cytoplasmic membrane), and thus conserves the redox energy in a proton gradient. This Trichodesmium erythraeum (strain IMS101) protein is NAD(P)H-quinone oxidoreductase chain 4 2.